The primary structure comprises 451 residues: Bifunctional protein GlmU (451 aa).

The interval 1 to 229 (MQRHAIVLAA…FEEIMGVNDR (229 aa)) is pyrophosphorylase. UDP-N-acetyl-alpha-D-glucosamine-binding positions include 8–11 (LAAG), Lys-22, Gln-72, and 77–78 (GT). Asp-102 lines the Mg(2+) pocket. 3 residues coordinate UDP-N-acetyl-alpha-D-glucosamine: Gly-139, Glu-154, and Asn-227. Mg(2+) is bound at residue Asn-227. Residues 230-250 (VMLSEAEKAFRKRINEQHMKN) are linker. Residues 251 to 451 (GVTIIDPVTT…QTTKEGYLKK (201 aa)) form an N-acetyltransferase region. UDP-N-acetyl-alpha-D-glucosamine contacts are provided by Arg-332 and Lys-350. His-362 acts as the Proton acceptor in catalysis. Residues Tyr-365 and Asn-376 each contribute to the UDP-N-acetyl-alpha-D-glucosamine site. Acetyl-CoA is bound by residues 385–386 (NY), Ala-422, and Arg-439.

In the N-terminal section; belongs to the N-acetylglucosamine-1-phosphate uridyltransferase family. The protein in the C-terminal section; belongs to the transferase hexapeptide repeat family. Homotrimer. It depends on Mg(2+) as a cofactor.

Its subcellular location is the cytoplasm. The enzyme catalyses alpha-D-glucosamine 1-phosphate + acetyl-CoA = N-acetyl-alpha-D-glucosamine 1-phosphate + CoA + H(+). It catalyses the reaction N-acetyl-alpha-D-glucosamine 1-phosphate + UTP + H(+) = UDP-N-acetyl-alpha-D-glucosamine + diphosphate. Its pathway is nucleotide-sugar biosynthesis; UDP-N-acetyl-alpha-D-glucosamine biosynthesis; N-acetyl-alpha-D-glucosamine 1-phosphate from alpha-D-glucosamine 6-phosphate (route II): step 2/2. It participates in nucleotide-sugar biosynthesis; UDP-N-acetyl-alpha-D-glucosamine biosynthesis; UDP-N-acetyl-alpha-D-glucosamine from N-acetyl-alpha-D-glucosamine 1-phosphate: step 1/1. It functions in the pathway bacterial outer membrane biogenesis; LPS lipid A biosynthesis. Functionally, catalyzes the last two sequential reactions in the de novo biosynthetic pathway for UDP-N-acetylglucosamine (UDP-GlcNAc). The C-terminal domain catalyzes the transfer of acetyl group from acetyl coenzyme A to glucosamine-1-phosphate (GlcN-1-P) to produce N-acetylglucosamine-1-phosphate (GlcNAc-1-P), which is converted into UDP-GlcNAc by the transfer of uridine 5-monophosphate (from uridine 5-triphosphate), a reaction catalyzed by the N-terminal domain. The chain is Bifunctional protein GlmU from Staphylococcus saprophyticus subsp. saprophyticus (strain ATCC 15305 / DSM 20229 / NCIMB 8711 / NCTC 7292 / S-41).